The chain runs to 238 residues: tRNA (guanine-N(7)-)-methyltransferase (238 aa).

Positions 1 to 12 (MTDTAENQTPND) are enriched in polar residues. The interval 1 to 20 (MTDTAENQTPNDRQAGHPRS) is disordered. S-adenosyl-L-methionine contacts are provided by E70, D95, D122, and D145. D145 is an active-site residue. Substrate contacts are provided by residues K149, D181, and 216–219 (TKFE).

It belongs to the class I-like SAM-binding methyltransferase superfamily. TrmB family.

The enzyme catalyses guanosine(46) in tRNA + S-adenosyl-L-methionine = N(7)-methylguanosine(46) in tRNA + S-adenosyl-L-homocysteine. It functions in the pathway tRNA modification; N(7)-methylguanine-tRNA biosynthesis. Its function is as follows. Catalyzes the formation of N(7)-methylguanine at position 46 (m7G46) in tRNA. The chain is tRNA (guanine-N(7)-)-methyltransferase from Neisseria meningitidis serogroup C (strain 053442).